The chain runs to 655 residues: D-xylonate dehydratase YagF (655 aa).

The protein belongs to the IlvD/Edd family.

It catalyses the reaction D-xylonate = 2-dehydro-3-deoxy-D-arabinonate + H2O. Functionally, catalyzes the dehydration of D-xylonic acid to form 2-dehydro-3-deoxy-D-pentonate. The polypeptide is D-xylonate dehydratase YagF (yagF) (Escherichia coli (strain K12)).